The primary structure comprises 165 residues: MALNLQDKQAIVAEVSEVAKGALSAVVADSRGVTVDKMTELRKAGREAGVYMRVVRNTLLRRVVEGTQFECLKDTFVGPTLIAYSMEHPGAAARLFKEFAKANAKFEVKAAAFEGELIPASQIDRLATLPTYEEAIARLMATMKEASAGKLVRTLAAVRDAKEAA.

It belongs to the universal ribosomal protein uL10 family. As to quaternary structure, part of the ribosomal stalk of the 50S ribosomal subunit. The N-terminus interacts with L11 and the large rRNA to form the base of the stalk. The C-terminus forms an elongated spine to which L12 dimers bind in a sequential fashion forming a multimeric L10(L12)X complex.

Functionally, forms part of the ribosomal stalk, playing a central role in the interaction of the ribosome with GTP-bound translation factors. In Salmonella agona (strain SL483), this protein is Large ribosomal subunit protein uL10.